The chain runs to 224 residues: Octanoyltransferase (224 aa).

The region spanning 38 to 213 (AETTDEVWLL…QFVRAAGFQS (176 aa)) is the BPL/LPL catalytic domain. Residues 77 to 84 (RGGQVTYH), 144 to 146 (SLG), and 157 to 159 (GLA) contribute to the substrate site. Cys-175 (acyl-thioester intermediate) is an active-site residue.

It belongs to the LipB family.

It localises to the cytoplasm. It carries out the reaction octanoyl-[ACP] + L-lysyl-[protein] = N(6)-octanoyl-L-lysyl-[protein] + holo-[ACP] + H(+). It functions in the pathway protein modification; protein lipoylation via endogenous pathway; protein N(6)-(lipoyl)lysine from octanoyl-[acyl-carrier-protein]: step 1/2. Its function is as follows. Catalyzes the transfer of endogenously produced octanoic acid from octanoyl-acyl-carrier-protein onto the lipoyl domains of lipoate-dependent enzymes. Lipoyl-ACP can also act as a substrate although octanoyl-ACP is likely to be the physiological substrate. This chain is Octanoyltransferase, found in Hahella chejuensis (strain KCTC 2396).